We begin with the raw amino-acid sequence, 291 residues long: Elongation factor Ts (291 aa).

The interval Thr78–Val81 is involved in Mg(2+) ion dislocation from EF-Tu.

Belongs to the EF-Ts family.

It is found in the cytoplasm. Its function is as follows. Associates with the EF-Tu.GDP complex and induces the exchange of GDP to GTP. It remains bound to the aminoacyl-tRNA.EF-Tu.GTP complex up to the GTP hydrolysis stage on the ribosome. The chain is Elongation factor Ts from Ureaplasma urealyticum serovar 10 (strain ATCC 33699 / Western).